Reading from the N-terminus, the 101-residue chain is Urease subunit beta (101 aa).

Belongs to the urease beta subunit family. As to quaternary structure, heterotrimer of UreA (gamma), UreB (beta) and UreC (alpha) subunits. Three heterotrimers associate to form the active enzyme.

The protein localises to the cytoplasm. The catalysed reaction is urea + 2 H2O + H(+) = hydrogencarbonate + 2 NH4(+). Its pathway is nitrogen metabolism; urea degradation; CO(2) and NH(3) from urea (urease route): step 1/1. This is Urease subunit beta from Burkholderia ambifaria (strain ATCC BAA-244 / DSM 16087 / CCUG 44356 / LMG 19182 / AMMD) (Burkholderia cepacia (strain AMMD)).